Consider the following 1428-residue polypeptide: uncharacterized protein (1428 aa).

Disordered stretches follow at residues 1–53 (MAKK…AFKV), 249–274 (DIKH…KDSK), and 377–413 (KNGI…ETRA). Polar residues predominate over residues 16–33 (ATTSIPSRSASSPANKNQ). The segment covering 34-51 (VKGEKNNKTQKVEPKNAF) has biased composition (basic and acidic residues). The segment covering 256–265 (KETQPSNQVD) has biased composition (polar residues). In terms of domain architecture, Helicase ATP-binding spans 641-811 (IDAVNNSQLL…FEGSNLITIP (171 aa)). 654-661 (GDTGCGKS) serves as a coordination point for ATP. Positions 758–761 (DEVH) match the DEAH box motif. Positions 886-1064 (LIVYLLKYIF…EVVLRVKMCQ (179 aa)) constitute a Helicase C-terminal domain.

Belongs to the helicase family. SKI2 subfamily.

The protein resides in the cytoplasm. This is an uncharacterized protein from Schizosaccharomyces pombe (strain 972 / ATCC 24843) (Fission yeast).